The following is a 208-amino-acid chain: MSTNGSIAAEARTARMERSTSESSVLVEINLDGTGVSDISTSVPFYDHMLTALSKHSLIDMTVKATGDIHIDVHHTVEDVAITFGEVLRTALGNKAGIRRFGEATVPLDEALAHAVVDVSGRPYLVHGGEPAGQEYHLIGGHFTGSLTRHVFEAITLHAGICLHMNVIAGRDPHHIVEAQFKAFARALRAAVEPDPRVEGIPSTKGAL.

The protein belongs to the imidazoleglycerol-phosphate dehydratase family.

It localises to the cytoplasm. It carries out the reaction D-erythro-1-(imidazol-4-yl)glycerol 3-phosphate = 3-(imidazol-4-yl)-2-oxopropyl phosphate + H2O. It functions in the pathway amino-acid biosynthesis; L-histidine biosynthesis; L-histidine from 5-phospho-alpha-D-ribose 1-diphosphate: step 6/9. This chain is Imidazoleglycerol-phosphate dehydratase, found in Arthrobacter sp. (strain FB24).